Consider the following 297-residue polypeptide: Putative S-adenosyl-L-methionine-dependent methyltransferase MSMEG_0614/MSMEI_0598 (297 aa).

Residues Asp125 and 154–155 (DL) contribute to the S-adenosyl-L-methionine site.

Belongs to the UPF0677 family.

Exhibits S-adenosyl-L-methionine-dependent methyltransferase activity. The polypeptide is Putative S-adenosyl-L-methionine-dependent methyltransferase MSMEG_0614/MSMEI_0598 (Mycolicibacterium smegmatis (strain ATCC 700084 / mc(2)155) (Mycobacterium smegmatis)).